Reading from the N-terminus, the 312-residue chain is Ribosomal RNA small subunit methyltransferase H (312 aa).

Residues 35 to 37 (GGH), Asp-55, Phe-85, Asp-101, and Gln-108 contribute to the S-adenosyl-L-methionine site.

This sequence belongs to the methyltransferase superfamily. RsmH family.

Its subcellular location is the cytoplasm. The enzyme catalyses cytidine(1402) in 16S rRNA + S-adenosyl-L-methionine = N(4)-methylcytidine(1402) in 16S rRNA + S-adenosyl-L-homocysteine + H(+). Specifically methylates the N4 position of cytidine in position 1402 (C1402) of 16S rRNA. The polypeptide is Ribosomal RNA small subunit methyltransferase H (Buchnera aphidicola subsp. Acyrthosiphon pisum (strain Tuc7)).